A 373-amino-acid polypeptide reads, in one-letter code: Dual-specificity RNA methyltransferase RlmN (373 aa).

The active-site Proton acceptor is the E94. The 240-residue stretch at 100 to 339 folds into the Radical SAM core domain; it reads EDDRATLCVS…VTIRKTRGDD (240 aa). A disulfide bridge links C107 with C344. 3 residues coordinate [4Fe-4S] cluster: C114, C118, and C121. S-adenosyl-L-methionine contacts are provided by residues 168–169, S200, 222–224, and N301; these read GE and SLH. C344 serves as the catalytic S-methylcysteine intermediate.

This sequence belongs to the radical SAM superfamily. RlmN family. [4Fe-4S] cluster serves as cofactor.

The protein resides in the cytoplasm. It catalyses the reaction adenosine(2503) in 23S rRNA + 2 reduced [2Fe-2S]-[ferredoxin] + 2 S-adenosyl-L-methionine = 2-methyladenosine(2503) in 23S rRNA + 5'-deoxyadenosine + L-methionine + 2 oxidized [2Fe-2S]-[ferredoxin] + S-adenosyl-L-homocysteine. The enzyme catalyses adenosine(37) in tRNA + 2 reduced [2Fe-2S]-[ferredoxin] + 2 S-adenosyl-L-methionine = 2-methyladenosine(37) in tRNA + 5'-deoxyadenosine + L-methionine + 2 oxidized [2Fe-2S]-[ferredoxin] + S-adenosyl-L-homocysteine. Functionally, specifically methylates position 2 of adenine 2503 in 23S rRNA and position 2 of adenine 37 in tRNAs. m2A2503 modification seems to play a crucial role in the proofreading step occurring at the peptidyl transferase center and thus would serve to optimize ribosomal fidelity. This is Dual-specificity RNA methyltransferase RlmN from Vibrio cholerae serotype O1 (strain M66-2).